A 185-amino-acid polypeptide reads, in one-letter code: Potassium-transporting ATPase KdpC subunit (185 aa).

The helical transmembrane segment at 14 to 34 (ALSLLTGVAYPLALTGIAAVI) threads the bilayer.

It belongs to the KdpC family. The system is composed of three essential subunits: KdpA, KdpB and KdpC.

It is found in the cell inner membrane. Part of the high-affinity ATP-driven potassium transport (or Kdp) system, which catalyzes the hydrolysis of ATP coupled with the electrogenic transport of potassium into the cytoplasm. This subunit acts as a catalytic chaperone that increases the ATP-binding affinity of the ATP-hydrolyzing subunit KdpB by the formation of a transient KdpB/KdpC/ATP ternary complex. The polypeptide is Potassium-transporting ATPase KdpC subunit (Cereibacter sphaeroides (strain KD131 / KCTC 12085) (Rhodobacter sphaeroides)).